We begin with the raw amino-acid sequence, 356 residues long: Protein translocase subunit SecY (356 aa).

Helical transmembrane passes span leucine 24 to isoleucine 44, isoleucine 77 to valine 97, leucine 125 to methionine 145, phenylalanine 154 to leucine 174, isoleucine 183 to valine 203, phenylalanine 217 to isoleucine 237, valine 274 to phenylalanine 294, and tyrosine 317 to phenylalanine 337.

This sequence belongs to the SecY/SEC61-alpha family. In terms of assembly, component of the Sec protein translocase complex. Heterotrimer consisting of SecY, SecE and SecG subunits. The heterotrimers can form oligomers, although 1 heterotrimer is thought to be able to translocate proteins. Interacts with the ribosome. Interacts with SecDF, and other proteins may be involved. Interacts with SecA.

The protein resides in the cell membrane. The central subunit of the protein translocation channel SecYEG. Consists of two halves formed by TMs 1-5 and 6-10. These two domains form a lateral gate at the front which open onto the bilayer between TMs 2 and 7, and are clamped together by SecE at the back. The channel is closed by both a pore ring composed of hydrophobic SecY resides and a short helix (helix 2A) on the extracellular side of the membrane which forms a plug. The plug probably moves laterally to allow the channel to open. The ring and the pore may move independently. This is Protein translocase subunit SecY from Buchnera aphidicola subsp. Acyrthosiphon kondoi (Acyrthosiphon kondoi symbiotic bacterium).